The following is a 365-amino-acid chain: WAT1-related protein At1g01070 (365 aa).

10 helical membrane-spanning segments follow: residues 14–34, 46–66, 83–103, 107–127, 139–159, 189–209, 221–241, 255–275, 285–305, and 310–330; these read YSPV…NALV, VIGA…AYVL, FVSG…GLSY, TVSC…ALIF, AGML…FLTF, WLLG…WMLF, YSST…LSLY, FVIT…TVAT, VFAS…DFLI, and LYLG…MFLW. The EamA 1 domain maps to 27–157; that stretch reads MGSVNALVKK…LICISGALFL (131 aa). One can recognise an EamA 2 domain in the interval 223–329; the sequence is STCLMSIFAA…VTITGLYMFL (107 aa). Positions 340-356 are enriched in polar residues; the sequence is TALSSGMDNEAQYTTPN. Residues 340 to 365 form a disordered region; the sequence is TALSSGMDNEAQYTTPNKDNDSKSPV.

The protein belongs to the drug/metabolite transporter (DMT) superfamily. Plant drug/metabolite exporter (P-DME) (TC 2.A.7.4) family.

The protein localises to the membrane. This is WAT1-related protein At1g01070 from Arabidopsis thaliana (Mouse-ear cress).